Consider the following 78-residue polypeptide: Large ribosomal subunit protein bL28 (78 aa).

A disordered region spans residues 1-23 (MSRVCQVSGKRVQTGNNVSHANN). Over residues 11-22 (RVQTGNNVSHAN) the composition is skewed to polar residues.

It belongs to the bacterial ribosomal protein bL28 family.

This Xanthomonas campestris pv. campestris (strain 8004) protein is Large ribosomal subunit protein bL28.